A 203-amino-acid polypeptide reads, in one-letter code: Probable NADPH:quinone oxidoreductase 2 (203 aa).

It belongs to the SsuE family. Homotetramer. Requires FMN as cofactor.

It carries out the reaction a quinone + NADH + H(+) = a quinol + NAD(+). The catalysed reaction is a quinone + NADPH + H(+) = a quinol + NADP(+). In terms of biological role, the enzyme apparently serves as a quinone reductase in connection with conjugation reactions of hydroquinones involved in detoxification pathways. The protein is Probable NADPH:quinone oxidoreductase 2 of Oryza sativa subsp. japonica (Rice).